The following is a 374-amino-acid chain: Translocating chain-associated membrane protein 1 (374 aa).

Residues Met1–Cys29 lie on the Cytoplasmic side of the membrane. Residues Val30–Phe50 traverse the membrane as a helical segment. The Lumenal segment spans residues Val51–Gly76. N-linked (GlcNAc...) asparagine glycosylation is present at Asn56. A helical transmembrane segment spans residues Ile77–Ile97. Residues Gln98 to Glu121 lie on the Cytoplasmic side of the membrane. Positions Ser117–His326 constitute a TLC domain. The helical transmembrane segment at Ser122 to Ser142 threads the bilayer. Topologically, residues Glu143–Asn159 are lumenal. A helical transmembrane segment spans residues Leu160–Phe180. The Cytoplasmic segment spans residues Pro181–Asp192. A helical membrane pass occupies residues Ile193–Leu213. Residue Asn214 is a topological domain, lumenal. Residues Leu215 to Ile235 traverse the membrane as a helical segment. The Cytoplasmic segment spans residues Ser236–Ser251. Residues Leu252–Val272 form a helical membrane-spanning segment. Residues Gly273–Arg297 are Lumenal-facing. A helical membrane pass occupies residues Ile298–Phe318. Over Gln319–Ser374 the chain is Cytoplasmic. Positions Val334 to Lys347 are enriched in basic residues. Residues Val334–Ser374 are disordered. A compositionally biased stretch (polar residues) spans Asn352–Ala363. Ser365 carries the phosphoserine modification.

This sequence belongs to the TRAM family. As to quaternary structure, interacts with SEC61B. May interact with Derlin-1/DERL1. N-glycosylated.

The protein localises to the endoplasmic reticulum membrane. Involved in the translocation of nascent protein chains into or through the endoplasmic reticulum (ER) membrane by facilitating the proper chain positioning at the SEC61 channel. Regulates the exposure of nascent secretory protein chain to the cytosol during translocation into the ER. May affect the phospholipid bilayer in the vicinity of the lateral gate of the SEC61 channel, thereby facilitating ER protein transport. Intimately associates with transmembrane (TM) domain of nascent membrane proteins during the entire integration process into the ER membrane. Associates with the second TM domain of G-protein-coupled receptor opsin/OPSD nascent chain in the ER membrane, which may facilitate its integration into the membrane. Under conditions of ER stress, participates in the disposal of misfolded ER membrane proteins during the unfolded protein response (UPR), an integrated stress response (ISR) pathway, by selectively retrotranslocating misfolded ER-membrane proteins from the ER into the cytosol where they are ubiquitinated and degraded by the proteasome. The sequence is that of Translocating chain-associated membrane protein 1 (TRAM1) from Pongo abelii (Sumatran orangutan).